The following is a 246-amino-acid chain: MKIHIMIAEDERLAREELMYLLQQENDIILCPSAENGDQLLNLYQEYNPNVIFLDIHMPGINGIEVAKKIRNEFEDKDIIIIFTTAYESYGVQAFEIQATDYLLKPFSEERFKIAMNRIRKTLSTKKVRKPKVDKLVVNLDEKMMVIDPNQIGFAAREGRTVKIHFISNEVIETKMNLKELEEKLSGFPFYRPHRSYLVNMDCIKEITPWFNGAYNLVIKDLAESTIPVSRTAAKGLFDALQGVHH.

The Response regulatory domain occupies 4–120 (HIMIAEDERL…RFKIAMNRIR (117 aa)). Aspartate 55 carries the 4-aspartylphosphate modification. The 108-residue stretch at 136-243 (LVVNLDEKMM…AKGLFDALQG (108 aa)) folds into the HTH LytTR-type domain.

Post-translationally, phosphorylated by LytS.

It is found in the cytoplasm. Member of the two-component regulatory system LytS/LytT that probably regulates genes involved in cell wall metabolism. In Oceanobacillus iheyensis (strain DSM 14371 / CIP 107618 / JCM 11309 / KCTC 3954 / HTE831), this protein is Sensory transduction protein LytT (lytT).